Reading from the N-terminus, the 267-residue chain is MQKDTIKIAIAGPRGRMGSEAVKLVEDTAHFELVGAIDRTYNREKLSDVMTSSSDAVIYTDITECFSETSPDVLIDLTTPEIGKLHTKIALEHGVRPVVGTTGFSESDLNELMELTDEKGIGAIIAPNFALGAVLMMKFSQMAANYFTDVEIIEQHHDQKLDAPSGTALKTAEMISAVREAKTQGHPDEKEILPGARGADQNGIRLHSVRLPGLIAHQEVMFGGDGQTLKIRHDSYNRASFMSGVKLAVEQVMKIDQLVYGLENIIE.

Residues 12–17 (GPRGRM), 100–102 (GTT), and 126–129 (APNF) contribute to the NAD(+) site. The active-site Proton donor/acceptor is the His156. Residue His157 coordinates (S)-2,3,4,5-tetrahydrodipicolinate. Lys160 functions as the Proton donor in the catalytic mechanism. 166 to 167 (GT) provides a ligand contact to (S)-2,3,4,5-tetrahydrodipicolinate.

It belongs to the DapB family.

It localises to the cytoplasm. The enzyme catalyses (S)-2,3,4,5-tetrahydrodipicolinate + NAD(+) + H2O = (2S,4S)-4-hydroxy-2,3,4,5-tetrahydrodipicolinate + NADH + H(+). It catalyses the reaction (S)-2,3,4,5-tetrahydrodipicolinate + NADP(+) + H2O = (2S,4S)-4-hydroxy-2,3,4,5-tetrahydrodipicolinate + NADPH + H(+). It functions in the pathway amino-acid biosynthesis; L-lysine biosynthesis via DAP pathway; (S)-tetrahydrodipicolinate from L-aspartate: step 4/4. In terms of biological role, catalyzes the conversion of 4-hydroxy-tetrahydrodipicolinate (HTPA) to tetrahydrodipicolinate. In Bacillus licheniformis (strain ATCC 14580 / DSM 13 / JCM 2505 / CCUG 7422 / NBRC 12200 / NCIMB 9375 / NCTC 10341 / NRRL NRS-1264 / Gibson 46), this protein is 4-hydroxy-tetrahydrodipicolinate reductase.